Consider the following 1167-residue polypeptide: MDIIDNVDITLPENGEDIVIVGGRRYDYNGDLAKFKAFKVAKHIWVVPGRYYGEKLDIQDGEKINGGIYDKDFLSQNQEKQEFMDGVILLLKRINNTLEGKRLLSLITSAVPFPNEDDGIYKQNNFILSDKTFKAYTSNIIIFGPGANLVENKVIAFNSGDAENGLGTISEICFQPLLTYKFGDYFQDPALDLLKCLIKSLYYLYGIKVPEDFTLPYRLTNNPDKTEYSQVNMEDLLISGGDDLNAAGQRPYWLWNNYFIDAKDKFDKYKEIYENQMKLDPNLEINLSNHLEQKFNINISELWSLNISNFARTFNLKSPRSFYKALKYYYRKKYYKIHYNEIFGTNYNIYGFIDGQVNASLKETDLNIINKPQQIINLIDNNNILLIKSYIYDDELNKIDYNFYNNYEIPYNYGNSFKIPNITGILLPSVNYELIDKIPKIAEIKPYIKDSTPLPDSEKTPIPKELNVGIPLPIHYLDSQIYKGDEDKDFILSPDFLKVVSTKDKSLVYSFLPNIVSYFDGYDKTKISTDKKYYLWIREVLNNYSIDITRTENIIGIFGVDEIVPWMGRALNILNTENTFETELRKNGLKALLSKDLNVIFPKTKVDPIPTDNPPLTIEKIDEKLSDIYIKNKFFLIKNYYITIQQWWICCYSQFLNLSYMCREAIINQQNLIEKIILNQLSYLARETSINIETLYILSVTTEKTIEDLREISQKSMNNICNFFERASVSIFHTDIYNKFIDHMKYIVDDANTKIINYINSNSNITQEEKNYLINKYMLTEEDFNFFNFDKLINLFNSKIQLTIKNEKPEYNLLLSINQNESNENITDISGNNVKISYSNNINILDGRNEQAIYLDNDSQYVDFKSKNFENGVTNNFTISFWMRTLEKVDTNSTLLTSKLNENSAGWQLDLRRNGLVWSMKDHNKNEINIYLNDFLDISWHYIVVSVNRLTNILTVYIDGELSVNRNIEEIYNLYSDVGTIKLQASGSKVRIESFSILNRDIQRDEVSNRYINYIDNVNLRNIYGERLEYNKEYEVSNYVYPRNLLYKVNDIYLAIERGSNSSNRFKLILININEDKKFVQQKDIVIIKDVTQNKYLGISEDSNKIKLVDRNNALELILDNHLLNPNYTTFSTKQEEYLRLSNIDGIYNWVIKDVSRLNDIYSWTLI.

The segment at 1 to 381 is light chain nLC; that stretch reads MDIIDNVDIT…PQQIINLIDN (381 aa). The interval 382–804 is N-heavy chain nHN; the sequence is NNILLIKSYI…LFNSKIQLTI (423 aa). Positions 805–1167 are C-heavy chain nHC; sequence KNEKPEYNLL…LNDIYSWTLI (363 aa).

The protein belongs to the botulism non-toxic nonhemagglutinin family.

Functionally, expression of the ptox operon (ntnh-orfX1-orfX2-orfX3-pmp1) in B.thuringiensis kills Anopheles but not Aedes mosquito 3rd instar larvae. The ntnh-pmp1 construct is about half as toxic. The sequence is that of Non-toxic nonhemagglutinin from Paraclostridium bifermentans (Clostridium bifermentans).